The primary structure comprises 238 residues: Ion-translocating oxidoreductase complex subunit E (238 aa).

The next 6 helical transmembrane spans lie at 20–40 (ALVQLLGLCPLLAVSSSVVNA), 41–61 (LGLGIATLLVLVISNSFVSLI), 72–92 (PAFVMIIASAVTCTELLMKAF), 95–115 (ELYQILGLFIPLIVTNCAVLG), 130–150 (AVDGFMMGLGFMLVLVAVGAV), and 185–205 (NVIFALLPPGAFIVVGMLIAA).

Belongs to the NqrDE/RnfAE family. In terms of assembly, the complex is composed of six subunits: RnfA, RnfB, RnfC, RnfD, RnfE and RnfG.

The protein resides in the cell inner membrane. Its function is as follows. Part of a membrane-bound complex that couples electron transfer with translocation of ions across the membrane. This chain is Ion-translocating oxidoreductase complex subunit E, found in Cellvibrio japonicus (strain Ueda107) (Pseudomonas fluorescens subsp. cellulosa).